We begin with the raw amino-acid sequence, 502 residues long: MQIKAEEISKIIEDQIQNYEQRVEMSETGTVLYVGDGIARVYGVQNAMSMELLEFPGGIMGMVLNLEEDNVGVALLGSDVGIKEGDPVKRTGKIFSVPVGDGVMGRVLNPLGEPIDGLGPIDAAEVRPVEIKAPGIIARKSVHEPMPTGLKAIDAMTPIGRGQRELIIGDRQTGKTAVCLDAILAQKETGIHCFYVAIGQKKSSVALVADTLRRHGALEYTTIISATASDPAPLQYIAAYTGCTMAEYYRDSGKHALIIYDDLSKQAVAYRQMSLLLRRPPGREAFPGDVFYLHSRLLERAAKVNDSLGAGSLTALPIIETQAGDVSAYIPTNVISITDGQVYLEPNLFNAGVRPAINVGLSVSRVGGAAQIKAMKQVAGTMRLDLAQYRELAAFAQFGSDLDKGTKAKLDRGARLVELLKQPQYQPMPSNEQVASIYAATRGHMDDVPVEDIRRFEAALLTFLRDTRKDVLDAIKEKQVIDEAVEKALTEAIAAFKQGWTA.

169-176 (GDRQTGKT) is a binding site for ATP.

Belongs to the ATPase alpha/beta chains family. In terms of assembly, F-type ATPases have 2 components, CF(1) - the catalytic core - and CF(0) - the membrane proton channel. CF(1) has five subunits: alpha(3), beta(3), gamma(1), delta(1), epsilon(1). CF(0) has three main subunits: a(1), b(2) and c(9-12). The alpha and beta chains form an alternating ring which encloses part of the gamma chain. CF(1) is attached to CF(0) by a central stalk formed by the gamma and epsilon chains, while a peripheral stalk is formed by the delta and b chains.

The protein localises to the cell inner membrane. The catalysed reaction is ATP + H2O + 4 H(+)(in) = ADP + phosphate + 5 H(+)(out). Functionally, produces ATP from ADP in the presence of a proton gradient across the membrane. The alpha chain is a regulatory subunit. This chain is ATP synthase subunit alpha, found in Desulfovibrio desulfuricans (strain ATCC 27774 / DSM 6949 / MB).